The chain runs to 180 residues: Flavodoxin 2 (180 aa).

Residues 4 to 173 (IGLFFGSNTG…RVAAWLAQIA (170 aa)) form the Flavodoxin-like domain. Residues 10-15 (SNTGKT), T57, G61, D99, 106-108 (NYL), and D155 contribute to the FMN site.

The cofactor is FMN.

Its function is as follows. Flavodoxins are low-potential electron donors to a number of redox enzymes. NifF is the electron donor to nitrogenase, and is thus implicated in nitrogen fixation. Does not function as an electron donor to nitrite reductase. This is Flavodoxin 2 from Azotobacter vinelandii.